An 84-amino-acid polypeptide reads, in one-letter code: UPF0729 protein F18A11.3 (84 aa).

A helical membrane pass occupies residues 1-21 (MVCLPCIFLPIMMAIYMKFIM).

It belongs to the UPF0729 family.

Its subcellular location is the cell membrane. The chain is UPF0729 protein F18A11.3 from Caenorhabditis elegans.